Here is a 717-residue protein sequence, read N- to C-terminus: HHIP-like protein 2 (717 aa).

Residues 1–40 (MLGKHTSPHTVPGHRAPWLSPGIFCLGLPFLLGWVGLLQG) form the signal peptide. Intrachain disulfides connect Cys203/Cys545, Cys207/Cys551, Cys423/Cys441, and Cys508/Cys607. The interval 642–717 (ARKASNATFT…MRQAAGRSHP (76 aa)) is disordered. The segment covering 646–662 (SNATFTSSSDRVASQKG) has biased composition (polar residues). N-linked (GlcNAc...) asparagine glycosylation is present at Asn647. Basic residues predominate over residues 672 to 687 (SSKKTFRRPGTKKKSR).

The protein belongs to the HHIP family.

It is found in the secreted. In Mus musculus (Mouse), this protein is HHIP-like protein 2 (Hhipl2).